The chain runs to 266 residues: UPF0294 protein YafD (266 aa).

Belongs to the UPF0294 family.

It is found in the cytoplasm. The polypeptide is UPF0294 protein YafD (Shigella dysenteriae serotype 1 (strain Sd197)).